The chain runs to 258 residues: 3-deoxy-manno-octulosonate cytidylyltransferase (258 aa).

This sequence belongs to the KdsB family.

The protein resides in the cytoplasm. The catalysed reaction is 3-deoxy-alpha-D-manno-oct-2-ulosonate + CTP = CMP-3-deoxy-beta-D-manno-octulosonate + diphosphate. Its pathway is nucleotide-sugar biosynthesis; CMP-3-deoxy-D-manno-octulosonate biosynthesis; CMP-3-deoxy-D-manno-octulosonate from 3-deoxy-D-manno-octulosonate and CTP: step 1/1. It participates in bacterial outer membrane biogenesis; lipopolysaccharide biosynthesis. Functionally, activates KDO (a required 8-carbon sugar) for incorporation into bacterial lipopolysaccharide in Gram-negative bacteria. This Parvibaculum lavamentivorans (strain DS-1 / DSM 13023 / NCIMB 13966) protein is 3-deoxy-manno-octulosonate cytidylyltransferase.